The chain runs to 56 residues: Large ribosomal subunit protein bL33 (56 aa).

This sequence belongs to the bacterial ribosomal protein bL33 family.

This chain is Large ribosomal subunit protein bL33, found in Anaplasma phagocytophilum (strain HZ).